We begin with the raw amino-acid sequence, 53 residues long: Metallothionein (53 aa).

Residues 1 to 6 (MRVIRM) constitute a propeptide that is removed on maturation. Positions 17, 19, 22, 24, 32, 33, 34, 43, and 45 each coordinate Cu(+).

This sequence belongs to the metallothionein superfamily.

In terms of biological role, metallothioneins are small proteins that have a high content of cysteine residues which allow them to bind heavy metal ions through clusters of thiolate bonds. MymT binds up to seven ions of Cu(+), with a preference for four to six Cu(+) ions, in a solvent-shielded core. MymT protects M.tuberculosis from copper toxicity. The polypeptide is Metallothionein (mymT) (Mycobacterium tuberculosis (strain CDC 1551 / Oshkosh)).